Consider the following 26-residue polypeptide: PRKCH upstream open reading frame 2 (26 aa).

In terms of assembly, interacts with protein kinase C eta as well as other protein kinases including PRKCD, PRKCQ and PRKCE but not with PRKCG or PRKCZ; the interactions lead to inhibition of kinase activity.

Functionally, product of an upstream open reading frame (ORF) of PRKCH which regulates translation of the downstream protein kinase C eta (PKC-eta) ORF. Functions as a repressive element that maintains low basal levels of PKC-eta in growing cells but enhances its expression during stress conditions induced by amino acid starvation in a EIF2AK4/GCN2-dependent manner. In addition to its role in regulating PKC-eta translation, also inhibits the kinase activity of PKC-eta as well as other protein kinases including PRKCD, PRKCQ and PRKCE but not PRKCA, PRKCG or PRKCZ. This is PRKCH upstream open reading frame 2 from Homo sapiens (Human).